Consider the following 448-residue polypeptide: 5-hydroxytryptamine receptor 7 (448 aa).

The Extracellular segment spans residues 1-86; it reads MMDVNSSGRP…INYGRVEKVV (86 aa). N5 and N69 each carry an N-linked (GlcNAc...) asparagine glycan. The chain crosses the membrane as a helical span at residues 87 to 111; the sequence is IGSILTLITLLTIAGNCLVVISVCF. The Cytoplasmic segment spans residues 112–121; that stretch reads VKKLRQPSNY. The chain crosses the membrane as a helical span at residues 122-143; that stretch reads LIVSLALADLSVAVAVMPFVSV. The Extracellular portion of the chain corresponds to 144–155; the sequence is TDLIGGKWIFGH. The helical transmembrane segment at 156-181 threads the bilayer; it reads FFCNVFIAMDVMCCTASIMTLCVISI. A disulfide bond links C158 and C234. D165 contacts serotonin. Topologically, residues 182–201 are cytoplasmic; sequence DRYLGITRPLTYPVRQNGKC. A helical membrane pass occupies residues 202-222; sequence MAKMILSVWLLSASITLPPLF. Residues 223–240 are Extracellular-facing; it reads GWAQNVNDDKVCLISQDF. The chain crosses the membrane as a helical span at residues 241-263; it reads GYTIYSTAVAFYIPMSVMLFMYY. Over 264–329 the chain is Cytoplasmic; that stretch reads QIYKAARKSA…SIFKREQKAA (66 aa). The helical transmembrane segment at 330–355 threads the bilayer; sequence TTLGIIVGAFTVCWLPFFLLSTARPF. The Extracellular portion of the chain corresponds to 356–366; the sequence is ICGTSCSCIPL. A helical transmembrane segment spans residues 367 to 390; that stretch reads WVERTCLWLGYANSLINPFIYAFF. Residues 391–448 lie on the Cytoplasmic side of the membrane; the sequence is NRDLRTTYRSLLQCQYRNINRKLSAAGMHEALKLAERPERSEFVLQNCDHCGKKGHDT. Residue C404 is the site of S-palmitoyl cysteine attachment.

The protein belongs to the G-protein coupled receptor 1 family.

It is found in the cell membrane. In terms of biological role, G-protein coupled receptor for 5-hydroxytryptamine (serotonin), a biogenic hormone that functions as a neurotransmitter, a hormone and a mitogen. Ligand binding causes a conformation change that triggers signaling via guanine nucleotide-binding proteins (G proteins) and modulates the activity of downstream effectors. HTR7 is coupled to G(s) G alpha proteins and mediates activation of adenylate cyclase activity. The sequence is that of 5-hydroxytryptamine receptor 7 (Htr7) from Mus musculus (Mouse).